The primary structure comprises 360 residues: Photosystem II protein D1 3 (360 aa).

Transmembrane regions (helical) follow at residues 29-46, 118-133, and 142-156; these read YVGW…TAAI, HFLI…QWEL, and WIPV…AATA. His-118 serves as a coordination point for chlorophyll a. Position 126 (Tyr-126) interacts with pheophytin a. [CaMn4O5] cluster is bound by residues Asp-170 and Glu-189. A helical membrane pass occupies residues 197–218; it reads FHMIGVAGVFGGALFSAMHGSL. His-198 is a chlorophyll a binding site. A quinone is bound by residues His-215 and 264-265; that span reads SF. His-215 contacts Fe cation. Fe cation is bound at residue His-272. The helical transmembrane segment at 274-288 threads the bilayer; that stretch reads FLAAWPVIGIWFAAL. Residues His-332, Glu-333, Asp-342, and Ala-344 each contribute to the [CaMn4O5] cluster site. Positions 345 to 360 are excised as a propeptide; it reads SGEVQPIALTAPAIAS.

The protein belongs to the reaction center PufL/M/PsbA/D family. As to quaternary structure, PSII is composed of 1 copy each of membrane proteins PsbA, PsbB, PsbC, PsbD, PsbE, PsbF, PsbH, PsbI, PsbJ, PsbK, PsbL, PsbM, PsbT, PsbX, PsbY, PsbZ, Psb30/Ycf12, peripheral proteins PsbO, CyanoQ (PsbQ), PsbU, PsbV and a large number of cofactors. It forms dimeric complexes. The cofactor is The D1/D2 heterodimer binds P680, chlorophylls that are the primary electron donor of PSII, and subsequent electron acceptors. It shares a non-heme iron and each subunit binds pheophytin, quinone, additional chlorophylls, carotenoids and lipids. D1 provides most of the ligands for the Mn4-Ca-O5 cluster of the oxygen-evolving complex (OEC). There is also a Cl(-1) ion associated with D1 and D2, which is required for oxygen evolution. The PSII complex binds additional chlorophylls, carotenoids and specific lipids.. In terms of processing, tyr-161 forms a radical intermediate that is referred to as redox-active TyrZ, YZ or Y-Z. C-terminally processed by CtpA; processing is essential to allow assembly of the oxygen-evolving complex and thus photosynthetic growth.

It localises to the cellular thylakoid membrane. It catalyses the reaction 2 a plastoquinone + 4 hnu + 2 H2O = 2 a plastoquinol + O2. In terms of biological role, photosystem II (PSII) is a light-driven water:plastoquinone oxidoreductase that uses light energy to abstract electrons from H(2)O, generating O(2) and a proton gradient subsequently used for ATP formation. It consists of a core antenna complex that captures photons, and an electron transfer chain that converts photonic excitation into a charge separation. The D1/D2 (PsbA/PsbD) reaction center heterodimer binds P680, the primary electron donor of PSII as well as several subsequent electron acceptors. The chain is Photosystem II protein D1 3 from Nostoc sp. (strain PCC 7120 / SAG 25.82 / UTEX 2576).